A 251-amino-acid chain; its full sequence is Protein CMS1 (251 aa).

The disordered stretch occupies residues 1 to 37; it reads MSLDNDINTKKRKLQDDEKPRKKRKHKRPTRDDDADL.

It belongs to the CMS1 family.

It is found in the nucleus. May play a role in the regulation of DNA replication and cell cycle control. This Chaetomium thermophilum (strain DSM 1495 / CBS 144.50 / IMI 039719) (Thermochaetoides thermophila) protein is Protein CMS1 (CSM1).